Consider the following 352-residue polypeptide: Ion-translocating oxidoreductase complex subunit D (352 aa).

4 helical membrane-spanning segments follow: residues 20–40 (IMLLVLIAALPGIAAQTWFFG), 42–62 (GTLFQIVLAAITALVAEAIVL), 69–91 (VASHLQDYSALLTGLLLAVSIPP), and 123–143 (PAMIGYVVLLISFPVQMTSWL). FMN phosphoryl threonine is present on Thr-187. 5 helical membrane-spanning segments follow: residues 215–235 (LAGVGWQWVNLAWLVGGVFLL), 242–262 (WHIPVSFLLTLALCAALGWLF), 267–287 (LASPQLHLLSGATMLGAFFIL), 301–321 (LIFGALAGVLVWLIRSFGGYP), and 322–342 (DGVAFAVLLANITVPLIDYYT).

Belongs to the NqrB/RnfD family. In terms of assembly, the complex is composed of six subunits: RsxA, RsxB, RsxC, RsxD, RsxE and RsxG. FMN serves as cofactor.

It is found in the cell inner membrane. Part of a membrane-bound complex that couples electron transfer with translocation of ions across the membrane. Required to maintain the reduced state of SoxR. This Salmonella typhi protein is Ion-translocating oxidoreductase complex subunit D.